Consider the following 505-residue polypeptide: RNA-splicing ligase RtcB homolog (505 aa).

Mn(2+)-binding residues include D119, C122, H227, and H259. 226-230 (NHYAE) serves as a coordination point for GMP. S300 carries the phosphoserine modification. H353 contributes to the Mn(2+) binding site. GMP contacts are provided by residues 353 to 354 (HN), 402 to 405 (GGTM), S409, and 428 to 431 (HGAG). Residue H428 is the GMP-histidine intermediate of the active site. A Glycyl lysine isopeptide (Lys-Gly) (interchain with G-Cter in SUMO2) cross-link involves residue K496. K504 serves as a coordination point for GMP.

The protein belongs to the RtcB family. In terms of assembly, catalytic component of the tRNA-splicing ligase complex. Mn(2+) is required as a cofactor.

It is found in the nucleus. It localises to the cytoplasm. It catalyses the reaction a 3'-end 3'-phospho-ribonucleotide-RNA + a 5'-end dephospho-ribonucleoside-RNA + GTP = a ribonucleotidyl-ribonucleotide-RNA + GMP + diphosphate. The catalysed reaction is a 3'-end 2',3'-cyclophospho-ribonucleotide-RNA + a 5'-end dephospho-ribonucleoside-RNA + GTP + H2O = a ribonucleotidyl-ribonucleotide-RNA + GMP + diphosphate + H(+). With respect to regulation, protein archease stimulates the activity of the tRNA ligase complex with high efficiency in the presence of GTP. In terms of biological role, catalytic subunit of the tRNA-splicing ligase complex that acts by directly joining spliced tRNA halves to mature-sized tRNAs by incorporating the precursor-derived splice junction phosphate into the mature tRNA as a canonical 3',5'-phosphodiester. May act as an RNA ligase with broad substrate specificity, and may function toward other RNAs. This is RNA-splicing ligase RtcB homolog from Homo sapiens (Human).